The primary structure comprises 154 residues: Ribosome maturation factor RimP (154 aa).

This sequence belongs to the RimP family.

The protein resides in the cytoplasm. Required for maturation of 30S ribosomal subunits. In Hydrogenobaculum sp. (strain Y04AAS1), this protein is Ribosome maturation factor RimP.